Consider the following 185-residue polypeptide: Elongation factor P (185 aa).

Belongs to the elongation factor P family.

It is found in the cytoplasm. The protein operates within protein biosynthesis; polypeptide chain elongation. Functionally, involved in peptide bond synthesis. Stimulates efficient translation and peptide-bond synthesis on native or reconstituted 70S ribosomes in vitro. Probably functions indirectly by altering the affinity of the ribosome for aminoacyl-tRNA, thus increasing their reactivity as acceptors for peptidyl transferase. This is Elongation factor P from Burkholderia lata (strain ATCC 17760 / DSM 23089 / LMG 22485 / NCIMB 9086 / R18194 / 383).